The primary structure comprises 368 residues: 3-dehydroquinate synthase (368 aa).

NAD(+) is bound by residues 71-76, 105-109, 129-130, Lys-142, Lys-151, and 169-172; these read DGEAFK, GVVGD, TT, and TLRT. Glu-184, His-247, and His-264 together coordinate Zn(2+).

The protein belongs to the sugar phosphate cyclases superfamily. Dehydroquinate synthase family. It depends on Co(2+) as a cofactor. Zn(2+) is required as a cofactor. Requires NAD(+) as cofactor.

It is found in the cytoplasm. The catalysed reaction is 7-phospho-2-dehydro-3-deoxy-D-arabino-heptonate = 3-dehydroquinate + phosphate. It functions in the pathway metabolic intermediate biosynthesis; chorismate biosynthesis; chorismate from D-erythrose 4-phosphate and phosphoenolpyruvate: step 2/7. In terms of biological role, catalyzes the conversion of 3-deoxy-D-arabino-heptulosonate 7-phosphate (DAHP) to dehydroquinate (DHQ). This is 3-dehydroquinate synthase from Cupriavidus necator (strain ATCC 17699 / DSM 428 / KCTC 22496 / NCIMB 10442 / H16 / Stanier 337) (Ralstonia eutropha).